Here is a 135-residue protein sequence, read N- to C-terminus: MIKHLRSYCLYLAWLFSCIGTLMSVYYSYILNVEPCLLCYYQRICLFPLVVILGIAAYREDISIKIYTLPLALVGFGIAIYQVCLQEIPGMTLDICGKVSCSTKLFLLGFITMPMASAAAFCAIACLLVLATKSK.

Residues 7 to 26 (SYCLYLAWLFSCIGTLMSVY) form a helical membrane-spanning segment. An intrachain disulfide couples cysteine 36 to cysteine 39. 2 helical membrane-spanning segments follow: residues 41–60 (YQRICLFPLVVILGIAAYRE) and 67–84 (YTLPLALVGFGIAIYQVC). An intrachain disulfide couples cysteine 96 to cysteine 101. The helical transmembrane segment at 109 to 131 (GFITMPMASAAAFCAIACLLVLA) threads the bilayer.

The protein belongs to the DsbB family. BdbC subfamily.

It localises to the cell inner membrane. Functionally, required for disulfide bond formation in some proteins. The sequence is that of Probable disulfide formation protein from Chlamydia trachomatis serovar D (strain ATCC VR-885 / DSM 19411 / UW-3/Cx).